A 106-amino-acid polypeptide reads, in one-letter code: Defensin-like protein 1 (106 aa).

The signal sequence occupies residues 1–25; it reads MARSLCFMAFAVLAMMLFVAYEVQA. 4 cysteine pairs are disulfide-bonded: cysteine 29–cysteine 73, cysteine 40–cysteine 60, cysteine 46–cysteine 67, and cysteine 50–cysteine 69.

The protein belongs to the DEFL family.

The protein localises to the secreted. It localises to the vacuole. The polypeptide is Defensin-like protein 1 (THIO1) (Nicotiana paniculata).